Reading from the N-terminus, the 503-residue chain is Cytochrome P450 11B1, mitochondrial (503 aa).

The transit peptide at 1–24 directs the protein to the mitochondrion; that stretch reads MALWAKARVWMAGPWLSLHRARPL. Residue Cys-450 coordinates heme.

The protein belongs to the cytochrome P450 family. The cofactor is heme.

Its subcellular location is the mitochondrion inner membrane. It carries out the reaction a steroid + 2 reduced [adrenodoxin] + O2 + 2 H(+) = an 11beta-hydroxysteroid + 2 oxidized [adrenodoxin] + H2O. The enzyme catalyses 11-deoxycortisol + 2 reduced [adrenodoxin] + O2 + 2 H(+) = cortisol + 2 oxidized [adrenodoxin] + H2O. It catalyses the reaction 21-hydroxyprogesterone + 2 reduced [adrenodoxin] + O2 + 2 H(+) = corticosterone + 2 oxidized [adrenodoxin] + H2O. The catalysed reaction is corticosterone + 2 reduced [adrenodoxin] + O2 + 2 H(+) = 18-hydroxycorticosterone + 2 oxidized [adrenodoxin] + H2O. It carries out the reaction 18-hydroxycorticosterone + 2 reduced [adrenodoxin] + O2 + 2 H(+) = aldosterone + 2 oxidized [adrenodoxin] + 2 H2O. The enzyme catalyses 21-hydroxyprogesterone + 2 reduced [adrenodoxin] + O2 + 2 H(+) = 19-hydroxy-11-deoxycorticosterone + 2 oxidized [adrenodoxin] + H2O. It catalyses the reaction 19-hydroxy-11-deoxycorticosterone + 2 reduced [adrenodoxin] + O2 + 2 H(+) = 19-oxo-11-deoxycorticosterone + 2 oxidized [adrenodoxin] + 2 H2O. Its pathway is steroid biosynthesis; glucocorticoid biosynthesis. It functions in the pathway steroid hormone biosynthesis. Functionally, a cytochrome P450 monooxygenase that catalyzes the biosynthesis of aldosterone and other adrenal corticoids. Differing from other species (such as human, rat and mice), it is able to catalyze three sequential oxidative reactions of 11-deoxycorticosterone (21-hydroxyprogesterone), namely 11-beta hydroxylation, followed by two successive oxidations at C18 yielding 18-hydroxy and then 18-oxo intermediates, and ending with the formation of aldosterone. Steroid 11beta, 18- and 19-hydroxylase. Mechanistically, uses molecular oxygen inserting one oxygen atom into a substrate and reducing the second into a water molecule. Two electrons are provided by NADPH via a two-protein mitochondrial transfer system comprising flavoprotein FDXR (adrenodoxin/ferredoxin reductase) and nonheme iron-sulfur protein FDX1 or FDX2 (adrenodoxin/ferredoxin). This Ovis aries (Sheep) protein is Cytochrome P450 11B1, mitochondrial (CYP11B1).